The chain runs to 377 residues: Chaperone protein DnaJ (377 aa).

The region spanning 4–69 (DYYEVLGVSK…EKRARYDQMG (66 aa)) is the J domain. The CR-type zinc-finger motif lies at 131–213 (GTEKEIQVPR…CSGKGTTRKV (83 aa)). Positions 144, 147, 161, 164, 187, 190, 201, and 204 each coordinate Zn(2+). 4 CXXCXGXG motif repeats span residues 144-151 (CTECHGSG), 161-168 (CSQCHGTG), 187-194 (CPACNGSG), and 201-208 (CKECSGKG).

Belongs to the DnaJ family. In terms of assembly, homodimer. Requires Zn(2+) as cofactor.

It is found in the cytoplasm. Its function is as follows. Participates actively in the response to hyperosmotic and heat shock by preventing the aggregation of stress-denatured proteins and by disaggregating proteins, also in an autonomous, DnaK-independent fashion. Unfolded proteins bind initially to DnaJ; upon interaction with the DnaJ-bound protein, DnaK hydrolyzes its bound ATP, resulting in the formation of a stable complex. GrpE releases ADP from DnaK; ATP binding to DnaK triggers the release of the substrate protein, thus completing the reaction cycle. Several rounds of ATP-dependent interactions between DnaJ, DnaK and GrpE are required for fully efficient folding. Also involved, together with DnaK and GrpE, in the DNA replication of plasmids through activation of initiation proteins. The polypeptide is Chaperone protein DnaJ (Desulfitobacterium hafniense (strain DSM 10664 / DCB-2)).